The sequence spans 440 residues: Chorismate synthase 1, chloroplastic (440 aa).

Residues 1-54 constitute a chloroplast transit peptide; the sequence is MASFVPTKQFVGASSSSDIGSSRLVSLQLPSKFSSSNFHLPSRPSQLKRLEIQA. Residues 100–147 form a disordered region; sequence RRRPGQSRITTPRKETDTCKISSGTADGLTTGSPIKVEVPNTDQRGND. A compositionally biased stretch (polar residues) spans 118–132; the sequence is CKISSGTADGLTTGS.

Belongs to the chorismate synthase family. As to quaternary structure, homotetramer. FMNH2 serves as cofactor. As to expression, predominantly expressed in flowers and roots and, to a lesser extent, in stems, leaves, and cotyledons.

The protein resides in the plastid. It localises to the chloroplast. The catalysed reaction is 5-O-(1-carboxyvinyl)-3-phosphoshikimate = chorismate + phosphate. It functions in the pathway metabolic intermediate biosynthesis; chorismate biosynthesis; chorismate from D-erythrose 4-phosphate and phosphoenolpyruvate: step 7/7. Functionally, catalyzes the last common step of the biosynthesis of aromatic amino acids, produced via the shikimic acid pathway. This Solanum lycopersicum (Tomato) protein is Chorismate synthase 1, chloroplastic (CS1).